The primary structure comprises 398 residues: 1-aminocyclopropane-1-carboxylate oxidase homolog 5 (398 aa).

The region spanning 247–347 (KSHIMFGQYY…RISMPCFVST (101 aa)) is the Fe2OG dioxygenase domain. Fe cation-binding residues include His271, Asp273, and His327. Residue Arg338 participates in 2-oxoglutarate binding.

This sequence belongs to the iron/ascorbate-dependent oxidoreductase family. Fe(2+) serves as cofactor. In terms of tissue distribution, expressed in etiolated seedlings, leaves, stems and flowers.

The polypeptide is 1-aminocyclopropane-1-carboxylate oxidase homolog 5 (2A6) (Arabidopsis thaliana (Mouse-ear cress)).